Reading from the N-terminus, the 217-residue chain is MKFFVDTADTQAIAELNDLGMVDGVTTNPSLILKSGRDIIEVTKEICGIVSGPVSAEVVALEAEAMIAEGRKLAEIAENITVKLPLTWDGLKACKTLSDEGKMVNVTLCFSANQALLAAKAGASFISPFIGRLDDMSLDGCELIEDIRTIYDNYGFGTEILAASIRTVNHVQQVALIGADVMTAPPEVIQKLASHPLTDKGLQQFMSDWEKTGQKIL.

Lys83 functions as the Schiff-base intermediate with substrate in the catalytic mechanism.

The protein belongs to the transaldolase family. Type 3B subfamily.

The protein localises to the cytoplasm. The enzyme catalyses D-sedoheptulose 7-phosphate + D-glyceraldehyde 3-phosphate = D-erythrose 4-phosphate + beta-D-fructose 6-phosphate. The protein operates within carbohydrate degradation; pentose phosphate pathway; D-glyceraldehyde 3-phosphate and beta-D-fructose 6-phosphate from D-ribose 5-phosphate and D-xylulose 5-phosphate (non-oxidative stage): step 2/3. In terms of biological role, transaldolase is important for the balance of metabolites in the pentose-phosphate pathway. The protein is Probable transaldolase of Roseobacter denitrificans (strain ATCC 33942 / OCh 114) (Erythrobacter sp. (strain OCh 114)).